A 404-amino-acid polypeptide reads, in one-letter code: Propionate kinase (404 aa).

This sequence belongs to the acetokinase family. PduW subfamily.

It localises to the cytoplasm. It catalyses the reaction propanoate + ATP = propanoyl phosphate + ADP. It participates in polyol metabolism; 1,2-propanediol degradation. Functionally, works with phosphate acetyltransferase (pta) to capture exogenous propionate and regenerate propionyl-CoA during degradation of 1,2-propanediol (1,2-PD). The sequence is that of Propionate kinase from Escherichia fergusonii (strain ATCC 35469 / DSM 13698 / CCUG 18766 / IAM 14443 / JCM 21226 / LMG 7866 / NBRC 102419 / NCTC 12128 / CDC 0568-73).